We begin with the raw amino-acid sequence, 144 residues long: Large ribosomal subunit protein uL15 (144 aa).

Residues 1 to 53 (MRLNTLSPAQGAKQAPKRVGRGIGSGLGKTGGRGHKGQNSRTGGGVRRGFEGG) form a disordered region. The segment covering 21–31 (RGIGSGLGKTG) has biased composition (gly residues).

The protein belongs to the universal ribosomal protein uL15 family. Part of the 50S ribosomal subunit.

Functionally, binds to the 23S rRNA. This chain is Large ribosomal subunit protein uL15, found in Hamiltonella defensa subsp. Acyrthosiphon pisum (strain 5AT).